Reading from the N-terminus, the 741-residue chain is Eukaryotic translation initiation factor 3 subunit B (741 aa).

Residues 1–10 are compositionally biased toward polar residues; it reads MAPSFDTLSE. A disordered region spans residues 1-22; that stretch reads MAPSFDTLSEQDLHEEEEEEID. The segment covering 13-22 has biased composition (acidic residues); that stretch reads LHEEEEEEID. The 87-residue stretch at 40–126 folds into the RRM domain; sequence TFVVIDGLPV…HTLLVNKLMD (87 aa). WD repeat units lie at residues 193–230, 232–289, 303–344, 514–557, and 572–610; these read AHWT…KQKQ, PHPF…RSFV, QPKK…LLGK, IEKK…EKPE, and LEHY…HTFS. Positions 695-722 are disordered; it reads KDAYGLPEDVDDPKKAKDAPAVTSEQGE.

This sequence belongs to the eIF-3 subunit B family. In terms of assembly, component of the eukaryotic translation initiation factor 3 (eIF-3) complex.

Its subcellular location is the cytoplasm. RNA-binding component of the eukaryotic translation initiation factor 3 (eIF-3) complex, which is involved in protein synthesis of a specialized repertoire of mRNAs and, together with other initiation factors, stimulates binding of mRNA and methionyl-tRNAi to the 40S ribosome. The eIF-3 complex specifically targets and initiates translation of a subset of mRNAs involved in cell proliferation. The polypeptide is Eukaryotic translation initiation factor 3 subunit B (prt1) (Aspergillus clavatus (strain ATCC 1007 / CBS 513.65 / DSM 816 / NCTC 3887 / NRRL 1 / QM 1276 / 107)).